The primary structure comprises 255 residues: Geranylgeranylglyceryl phosphate synthase (255 aa).

Residues D25 and S54 each contribute to the Mg(2+) site. Residues 173-179 (YLEGGSG), 203-204 (GG), and 225-226 (GT) contribute to the sn-glycerol 1-phosphate site.

The protein belongs to the GGGP/HepGP synthase family. Group II subfamily. It depends on Mg(2+) as a cofactor.

Its subcellular location is the cytoplasm. It carries out the reaction sn-glycerol 1-phosphate + (2E,6E,10E)-geranylgeranyl diphosphate = sn-3-O-(geranylgeranyl)glycerol 1-phosphate + diphosphate. The protein operates within membrane lipid metabolism; glycerophospholipid metabolism. Functionally, prenyltransferase that catalyzes the transfer of the geranylgeranyl moiety of geranylgeranyl diphosphate (GGPP) to the C3 hydroxyl of sn-glycerol-1-phosphate (G1P). This reaction is the first ether-bond-formation step in the biosynthesis of archaeal membrane lipids. This Thermofilum pendens (strain DSM 2475 / Hrk 5) protein is Geranylgeranylglyceryl phosphate synthase.